Here is a 494-residue protein sequence, read N- to C-terminus: Cytochrome P450 71D94 (494 aa).

Residues 1-21 (MELNLLLVIIILVATYTVSLL) traverse the membrane as a helical; Signal-anchor for type II membrane protein segment. Cys434 provides a ligand contact to heme.

It belongs to the cytochrome P450 family. Heme is required as a cofactor.

The protein localises to the endoplasmic reticulum membrane. Cytochrome P450 oxygenase of undefined substrate. Not active with limonene, (+)- or (-)-piperitone, (-)-isopiperitone, piperitenone or (+)-pulegone. This is Cytochrome P450 71D94 (CYP71D94) from Mentha gracilis (Gingermint).